The chain runs to 408 residues: MSNIWLYFVPPIAGGIIGYFTNDIAIKMLFRPYRPYYIFRRKLPFTPGLIPANQERLAKRVADTIMGSLLTPSELQNLARRLLQTERMEAAILWLLQMSLDQLKLNTDTKSTKILANILRDLLGQSLPRLLKVWAKREYFLEAQINQIFDQILLEFQLTEIQAAQLSDWLLKVVVPPDVLRKTLIDFLTDQNISIIDEGFREKASGTYWVVANLFGLRNTLTRLRTFCLDERDLTNQRLMELITALAVKERITEWLHSLSMQNLPVSTVRELRNTMQNSVRLYLQENGTDLIQALSLSVAWEHIADLIINRLQASSIMNSSLELVSRELALILERYLERDLENIVALAIPILNIDQVIIDRIKGTSAEELEVAVNVIVKNELQAIVNLGGVLGVVVGSFQTILLVLQR.

The next 2 helical transmembrane spans lie at 4-24 and 385-405; these read IWLY…TNDI and IVNL…ILLV.

The protein belongs to the UPF0754 family.

Its subcellular location is the cell inner membrane. The chain is UPF0754 membrane protein Tery_3973 from Trichodesmium erythraeum (strain IMS101).